A 503-amino-acid polypeptide reads, in one-letter code: 26S proteasome non-ATPase regulatory subunit 5 (503 aa).

N-acetylalanine is present on Ala2.

The protein belongs to the proteasome subunit S5B/HSM3 family. In terms of assembly, interacts with PSMC1, PSMC2, PSMD1 and PSMD6. Part of transient complex containing PSMD5, PSMC2, PSMC1 and PSMD2 formed during the assembly of the 26S proteasome.

Functionally, acts as a chaperone during the assembly of the 26S proteasome, specifically of the base subcomplex of the PA700/19S regulatory complex (RC). In the initial step of the base subcomplex assembly is part of an intermediate PSMD5:PSMC2:PSMC1:PSMD2 module which probably assembles with a PSMD10:PSMC4:PSMC5:PAAF1 module followed by dissociation of PSMD5. This chain is 26S proteasome non-ATPase regulatory subunit 5 (PSMD5), found in Bos taurus (Bovine).